Here is a 345-residue protein sequence, read N- to C-terminus: Mannonate dehydratase 2 (345 aa).

It belongs to the mannonate dehydratase family. Requires Fe(2+) as cofactor. The cofactor is Mn(2+).

The enzyme catalyses D-mannonate = 2-dehydro-3-deoxy-D-gluconate + H2O. The protein operates within carbohydrate metabolism; pentose and glucuronate interconversion. Catalyzes the dehydration of D-mannonate. The polypeptide is Mannonate dehydratase 2 (uxuA2) (Halalkalibacterium halodurans (strain ATCC BAA-125 / DSM 18197 / FERM 7344 / JCM 9153 / C-125) (Bacillus halodurans)).